A 270-amino-acid polypeptide reads, in one-letter code: uncharacterized protein (270 aa).

Residues 1–23 form the signal peptide; that stretch reads MKKLLIILAATLVLVLGSSGNFR.

This is an uncharacterized protein from Archaeoglobus fulgidus (strain ATCC 49558 / DSM 4304 / JCM 9628 / NBRC 100126 / VC-16).